A 284-amino-acid polypeptide reads, in one-letter code: Polyamine aminopropyltransferase (284 aa).

Positions 2–237 constitute a PABS domain; the sequence is ELWYTEKHTE…GHWLFGFASK (236 aa). Position 31 (Q31) interacts with S-methyl-5'-thioadenosine. Residues H62 and D86 each contribute to the spermidine site. S-methyl-5'-thioadenosine-binding positions include E106 and 137-138; that span reads DG. The active-site Proton acceptor is the D155. 155 to 158 serves as a coordination point for spermidine; it reads DSTD. P162 provides a ligand contact to S-methyl-5'-thioadenosine.

The protein belongs to the spermidine/spermine synthase family. As to quaternary structure, homodimer or homotetramer.

The protein localises to the cytoplasm. The enzyme catalyses S-adenosyl 3-(methylsulfanyl)propylamine + putrescine = S-methyl-5'-thioadenosine + spermidine + H(+). The protein operates within amine and polyamine biosynthesis; spermidine biosynthesis; spermidine from putrescine: step 1/1. Catalyzes the irreversible transfer of a propylamine group from the amino donor S-adenosylmethioninamine (decarboxy-AdoMet) to putrescine (1,4-diaminobutane) to yield spermidine. The polypeptide is Polyamine aminopropyltransferase (Clostridium botulinum (strain Eklund 17B / Type B)).